A 109-amino-acid polypeptide reads, in one-letter code: Nucleoid-associated protein BU482 (109 aa).

This sequence belongs to the YbaB/EbfC family. As to quaternary structure, homodimer.

The protein resides in the cytoplasm. Its subcellular location is the nucleoid. Functionally, binds to DNA and alters its conformation. May be involved in regulation of gene expression, nucleoid organization and DNA protection. The chain is Nucleoid-associated protein BU482 from Buchnera aphidicola subsp. Acyrthosiphon pisum (strain APS) (Acyrthosiphon pisum symbiotic bacterium).